A 151-amino-acid chain; its full sequence is Ubiquitin-conjugating enzyme E2 2 (151 aa).

The region spanning 4–150 (AARRRLMRDF…VRETVERSWE (147 aa)) is the UBC core domain. The active-site Glycyl thioester intermediate is the cysteine 88.

It belongs to the ubiquitin-conjugating enzyme family.

It localises to the cytoplasm. The protein localises to the nucleus. It carries out the reaction S-ubiquitinyl-[E1 ubiquitin-activating enzyme]-L-cysteine + [E2 ubiquitin-conjugating enzyme]-L-cysteine = [E1 ubiquitin-activating enzyme]-L-cysteine + S-ubiquitinyl-[E2 ubiquitin-conjugating enzyme]-L-cysteine.. The protein operates within protein modification; protein ubiquitination. In terms of biological role, catalyzes the covalent attachment of ubiquitin to other proteins. Plays a role in transcription regulation by catalyzing the monoubiquitination of histone H2B to form H2BK123ub1. H2BK123ub1 gives a specific tag for epigenetic transcriptional activation and is also a prerequisite for H3K4me and H3K79me formation. Also involved in postreplication repair of UV-damaged DNA, in N-end rule-dependent protein degradation and in sporulation. This Trichoderma harzianum (Hypocrea lixii) protein is Ubiquitin-conjugating enzyme E2 2 (UBC2).